A 357-amino-acid chain; its full sequence is 3-isopropylmalate dehydrogenase (357 aa).

76 to 89 (GPQWDTIDPSLRPE) provides a ligand contact to NAD(+). 4 residues coordinate substrate: arginine 96, arginine 106, arginine 134, and aspartate 224. 3 residues coordinate Mg(2+): aspartate 224, aspartate 248, and aspartate 252. 282 to 294 (GSAPDIAGKGIAN) is a binding site for NAD(+).

Belongs to the isocitrate and isopropylmalate dehydrogenases family. LeuB type 1 subfamily. As to quaternary structure, homodimer. The cofactor is Mg(2+). Requires Mn(2+) as cofactor.

It localises to the cytoplasm. The enzyme catalyses (2R,3S)-3-isopropylmalate + NAD(+) = 4-methyl-2-oxopentanoate + CO2 + NADH. It participates in amino-acid biosynthesis; L-leucine biosynthesis; L-leucine from 3-methyl-2-oxobutanoate: step 3/4. Functionally, catalyzes the oxidation of 3-carboxy-2-hydroxy-4-methylpentanoate (3-isopropylmalate) to 3-carboxy-4-methyl-2-oxopentanoate. The product decarboxylates to 4-methyl-2 oxopentanoate. This Xanthomonas euvesicatoria pv. vesicatoria (strain 85-10) (Xanthomonas campestris pv. vesicatoria) protein is 3-isopropylmalate dehydrogenase.